The following is a 199-amino-acid chain: Casparian strip membrane protein 1 (199 aa).

At 1 to 37 the chain is on the cytoplasmic side; it reads MKSESAAIDIPESSSVAKGKAPLIAVSRNEKGGYRKG. The helical transmembrane segment at 38 to 58 threads the bilayer; the sequence is IAIFDFILRLAAIATALAAAA. Residues 59–87 are Extracellular-facing; that stretch reads AMGTSDETLPFFTQFFQFQASYDDLPTFQ. The chain crosses the membrane as a helical span at residues 88-108; sequence FFVIAIAIVGGYLVLSLPFSI. Residues 109-120 are Cytoplasmic-facing; the sequence is VAIVRPHAVGPR. A helical membrane pass occupies residues 121–141; the sequence is LLLIILDAVALTLNTAAGAAA. Residues 142 to 173 are Extracellular-facing; that stretch reads AAIVYLAHNGNSNTNWLAICQQYGDFCQKVSG. The chain crosses the membrane as a helical span at residues 174–194; that stretch reads AVVASFITVVIFVFLIVLSAF. The Cytoplasmic segment spans residues 195-199; that stretch reads ALRRH.

Belongs to the Casparian strip membrane proteins (CASP) family. As to quaternary structure, homodimer and heterodimers.

Its subcellular location is the cell membrane. Regulates membrane-cell wall junctions and localized cell wall deposition. Required for establishment of the Casparian strip membrane domain (CSD) and the subsequent formation of Casparian strips, a cell wall modification of the root endodermis that determines an apoplastic barrier between the intraorganismal apoplasm and the extraorganismal apoplasm and prevents lateral diffusion. The polypeptide is Casparian strip membrane protein 1 (Populus trichocarpa (Western balsam poplar)).